The chain runs to 103 residues: Pyrimidine/purine nucleoside phosphorylase (103 aa).

Belongs to the nucleoside phosphorylase PpnP family.

It carries out the reaction a purine D-ribonucleoside + phosphate = a purine nucleobase + alpha-D-ribose 1-phosphate. The catalysed reaction is adenosine + phosphate = alpha-D-ribose 1-phosphate + adenine. The enzyme catalyses cytidine + phosphate = cytosine + alpha-D-ribose 1-phosphate. It catalyses the reaction guanosine + phosphate = alpha-D-ribose 1-phosphate + guanine. It carries out the reaction inosine + phosphate = alpha-D-ribose 1-phosphate + hypoxanthine. The catalysed reaction is thymidine + phosphate = 2-deoxy-alpha-D-ribose 1-phosphate + thymine. The enzyme catalyses uridine + phosphate = alpha-D-ribose 1-phosphate + uracil. It catalyses the reaction xanthosine + phosphate = alpha-D-ribose 1-phosphate + xanthine. Functionally, catalyzes the phosphorolysis of diverse nucleosides, yielding D-ribose 1-phosphate and the respective free bases. Can use uridine, adenosine, guanosine, cytidine, thymidine, inosine and xanthosine as substrates. Also catalyzes the reverse reactions. This is Pyrimidine/purine nucleoside phosphorylase from Shewanella sp. (strain MR-4).